The following is a 452-amino-acid chain: Deoxybrevianamide E synthase notF (452 aa).

Residues M1–K19 show a composition bias toward basic and acidic residues. The disordered stretch occupies residues M1–L38. Low complexity predominate over residues P21 to L38. A brevianamide F-binding site is contributed by E108. Residues R122, K212, Y214, K282, Y284, Y371, Y436, and Y440 each coordinate dimethylallyl diphosphate.

Belongs to the tryptophan dimethylallyltransferase family. As to quaternary structure, monomer.

The catalysed reaction is brevianamide F + dimethylallyl diphosphate = deoxybrevianamide E + diphosphate. It participates in alkaloid biosynthesis. With respect to regulation, addition of 5 mM Mg(2+), Ca(2+) or Mn(2+) slightly enhances catalysis (about 100-120%). Significant reduction of enzyme activity (2%-35%) is observed with Cu(2+), Zn(2+), Fe(2+), or Sn(2+) (5 mM). In terms of biological role, deoxybrevianamide E synthase; part of the gene cluster that mediates the biosynthesis of notoamide, a fungal indole alkaloid that belongs to a family of natural products containing a characteristic bicyclo[2.2.2]diazaoctane core. The first step of notoamide biosynthesis involves coupling of L-proline and L-tryptophan by the bimodular NRPS notE, to produce cyclo-L-tryptophan-L-proline called brevianamide F. The reverse prenyltransferase notF then acts as a deoxybrevianamide E synthase and converts brevianamide F to deoxybrevianamide E via reverse prenylation at C-2 of the indole ring leading to the bicyclo[2.2.2]diazaoctane core. Deoxybrevianamide E is further hydroxylated at C-6 of the indole ring, likely catalyzed by the cytochrome P450 monooxygenase notG, to yield 6-hydroxy-deoxybrevianamide E. 6-hydroxy-deoxybrevianamide E is a specific substrate of the prenyltransferase notC for normal prenylation at C-7 to produce 6-hydroxy-7-prenyl-deoxybrevianamide, also called notoamide S. As the proposed pivotal branching point in notoamide biosynthesis, notoamide S can be diverted to notoamide E through an oxidative pyran ring closure putatively catalyzed by either notH cytochrome P450 monooxygenase or the notD FAD-linked oxidoreductase. This step would be followed by an indole 2,3-epoxidation-initiated pinacol-like rearrangement catalyzed by the notB FAD-dependent monooxygenase leading to the formation of notoamide C and notoamide D. On the other hand notoamide S is converted to notoamide T by notH (or notD), a bifunctional oxidase that also functions as the intramolecular Diels-Alderase responsible for generation of (+)-notoamide T. To generate antipodal (-)-notoaminide T, notH' (or notD') in Aspergillus versicolor is expected to catalyze a Diels-Alder reaction leading to the opposite stereochemistry. The remaining oxidoreductase notD (or notH) likely catalyzes the oxidative pyran ring formation to yield (+)-stephacidin A. The FAD-dependent monooxygenase notI is highly similar to notB and is predicted to catalyze a similar conversion from (+)-stephacidin A to (-)-notoamide B via the 2,3-epoxidation of (+)-stephacidin A followed by a pinacol-type rearrangement. Finally, it remains unclear which enzyme could be responsible for the final hydroxylation steps leading to notoamide A and sclerotiamide. This is Deoxybrevianamide E synthase notF from Aspergillus sp. (strain MF297-2).